Reading from the N-terminus, the 481-residue chain is Cobyric acid synthase (481 aa).

The GATase cobBQ-type domain occupies 247–433 (AFNVVVPLLP…LHGLFDVPDS (187 aa)). Residue Cys-328 is the Nucleophile of the active site. Residue His-425 is part of the active site.

It belongs to the CobB/CobQ family. CobQ subfamily.

It functions in the pathway cofactor biosynthesis; adenosylcobalamin biosynthesis. Catalyzes amidations at positions B, D, E, and G on adenosylcobyrinic A,C-diamide. NH(2) groups are provided by glutamine, and one molecule of ATP is hydrogenolyzed for each amidation. The polypeptide is Cobyric acid synthase (Alcanivorax borkumensis (strain ATCC 700651 / DSM 11573 / NCIMB 13689 / SK2)).